The following is a 335-amino-acid chain: Aspartate carbamoyltransferase catalytic subunit (335 aa).

Carbamoyl phosphate contacts are provided by R81 and T82. K109 contacts L-aspartate. The carbamoyl phosphate site is built by R131, H159, and Q162. R192 and R246 together coordinate L-aspartate. Carbamoyl phosphate contacts are provided by G287 and P288.

Belongs to the aspartate/ornithine carbamoyltransferase superfamily. ATCase family. As to quaternary structure, heterododecamer (2C3:3R2) of six catalytic PyrB chains organized as two trimers (C3), and six regulatory PyrI chains organized as three dimers (R2).

The catalysed reaction is carbamoyl phosphate + L-aspartate = N-carbamoyl-L-aspartate + phosphate + H(+). It functions in the pathway pyrimidine metabolism; UMP biosynthesis via de novo pathway; (S)-dihydroorotate from bicarbonate: step 2/3. Functionally, catalyzes the condensation of carbamoyl phosphate and aspartate to form carbamoyl aspartate and inorganic phosphate, the committed step in the de novo pyrimidine nucleotide biosynthesis pathway. In Caulobacter sp. (strain K31), this protein is Aspartate carbamoyltransferase catalytic subunit.